A 97-amino-acid chain; its full sequence is CLAVATA3/ESR (CLE)-related protein ESR2-C (97 aa).

Residues 1-97 (TRTDDKPGVN…IGPPPFLDRY (97 aa)) form a disordered region. Residues proline 47 and proline 50 each carry the hydroxyproline modification. Proline 50 carries an O-linked (Ara...) hydroxyproline glycan.

This sequence belongs to the CLV3/ESR signal peptide family. Post-translationally, the O-glycosylation (arabinosylation) of the hydroxyproline Pro-50 enhances binding affinity of the ESR2Cp peptide for its receptor. In terms of tissue distribution, seed endosperm.

The protein localises to the secreted. Its subcellular location is the extracellular space. Extracellular signal peptide that regulates cell fate. This chain is CLAVATA3/ESR (CLE)-related protein ESR2-C, found in Zea mays (Maize).